The primary structure comprises 397 residues: Mannonate dehydratase (397 aa).

This sequence belongs to the mannonate dehydratase family. Fe(2+) serves as cofactor. Requires Mn(2+) as cofactor.

It carries out the reaction D-mannonate = 2-dehydro-3-deoxy-D-gluconate + H2O. The protein operates within carbohydrate metabolism; pentose and glucuronate interconversion. Catalyzes the dehydration of D-mannonate. The protein is Mannonate dehydratase of Yersinia pestis bv. Antiqua (strain Angola).